Reading from the N-terminus, the 185-residue chain is Adenylate kinase (185 aa).

ATP is bound at residue 8-16; the sequence is GIPGSGSTT.

It belongs to the archaeal adenylate kinase family.

It is found in the cytoplasm. The enzyme catalyses AMP + ATP = 2 ADP. The polypeptide is Adenylate kinase (adkA) (Methanothermobacter thermautotrophicus (strain ATCC 29096 / DSM 1053 / JCM 10044 / NBRC 100330 / Delta H) (Methanobacterium thermoautotrophicum)).